A 684-amino-acid chain; its full sequence is 1,4-alpha-glucan-branching enzyme (684 aa).

(1,4-alpha-D-glucosyl)n-binding residues include W88 and K123. D340 acts as the Nucleophile in catalysis. The Proton donor role is filled by E395.

This sequence belongs to the glycosyl hydrolase 13 family. GlgB subfamily.

Its subcellular location is the cytoplasm. It catalyses the reaction Transfers a segment of a (1-&gt;4)-alpha-D-glucan chain to a primary hydroxy group in a similar glucan chain.. Its pathway is glycan biosynthesis; glycogen biosynthesis. Functionally, glycogen-branching enzyme participates in the glycogen biosynthetic process along with glycogenin and glycogen synthase. Generates alpha-1,6-glucosidic branches from alpha-1,4-linked glucose chains, to increase solubility of the glycogen polymer. The sequence is that of 1,4-alpha-glucan-branching enzyme (be1) from Emericella nidulans (strain FGSC A4 / ATCC 38163 / CBS 112.46 / NRRL 194 / M139) (Aspergillus nidulans).